Reading from the N-terminus, the 377-residue chain is N-acetyldiaminopimelate deacetylase (377 aa).

Aspartate 69 is an active-site residue. The active-site Proton acceptor is the glutamate 128.

It belongs to the peptidase M20A family. N-acetyldiaminopimelate deacetylase subfamily.

It carries out the reaction N-acetyl-(2S,6S)-2,6-diaminopimelate + H2O = (2S,6S)-2,6-diaminopimelate + acetate. It participates in amino-acid biosynthesis; L-lysine biosynthesis via DAP pathway; LL-2,6-diaminopimelate from (S)-tetrahydrodipicolinate (acetylase route): step 3/3. In terms of biological role, catalyzes the conversion of N-acetyl-diaminopimelate to diaminopimelate and acetate. This chain is N-acetyldiaminopimelate deacetylase, found in Streptococcus sanguinis (strain SK36).